Consider the following 126-residue polypeptide: Holo-[acyl-carrier-protein] synthase (126 aa).

2 residues coordinate Mg(2+): Asp6 and Glu55.

This sequence belongs to the P-Pant transferase superfamily. AcpS family. The cofactor is Mg(2+).

It is found in the cytoplasm. It catalyses the reaction apo-[ACP] + CoA = holo-[ACP] + adenosine 3',5'-bisphosphate + H(+). In terms of biological role, transfers the 4'-phosphopantetheine moiety from coenzyme A to a Ser of acyl-carrier-protein. In Chlorobium limicola (strain DSM 245 / NBRC 103803 / 6330), this protein is Holo-[acyl-carrier-protein] synthase.